The following is a 381-amino-acid chain: Cytochrome b (381 aa).

Helical transmembrane passes span 33–53, 77–98, 113–133, and 178–198; these read FGSL…FLAM, WLIR…FLHV, WNIG…GYVL, and FFAF…VHLL. 2 residues coordinate heme b: H83 and H97. Heme b-binding residues include H182 and H196. Residue H201 participates in a ubiquinone binding. 4 helical membrane-spanning segments follow: residues 226 to 246, 288 to 308, 320 to 340, and 347 to 367; these read IKDA…ALFS, LGGV…PLLH, VSQT…WIGG, and FIII…VLMP.

Belongs to the cytochrome b family. As to quaternary structure, the cytochrome bc1 complex contains 11 subunits: 3 respiratory subunits (MT-CYB, CYC1 and UQCRFS1), 2 core proteins (UQCRC1 and UQCRC2) and 6 low-molecular weight proteins (UQCRH/QCR6, UQCRB/QCR7, UQCRQ/QCR8, UQCR10/QCR9, UQCR11/QCR10 and a cleavage product of UQCRFS1). This cytochrome bc1 complex then forms a dimer. It depends on heme b as a cofactor.

The protein localises to the mitochondrion inner membrane. In terms of biological role, component of the ubiquinol-cytochrome c reductase complex (complex III or cytochrome b-c1 complex) that is part of the mitochondrial respiratory chain. The b-c1 complex mediates electron transfer from ubiquinol to cytochrome c. Contributes to the generation of a proton gradient across the mitochondrial membrane that is then used for ATP synthesis. The chain is Cytochrome b (MT-CYB) from Ningaui yvonnae (Southern ningaui).